We begin with the raw amino-acid sequence, 216 residues long: Somatotropin (216 aa).

Positions Met-1–Ala-26 are cleaved as a signal peptide. His-45 is a binding site for Zn(2+). Cys-78 and Cys-189 are joined by a disulfide. At Ser-131 the chain carries Phosphoserine. Position 198 (Glu-198) interacts with Zn(2+). A disulfide bond links Cys-206 and Cys-214.

This sequence belongs to the somatotropin/prolactin family.

It localises to the secreted. Its function is as follows. Plays an important role in growth control. Its major role in stimulating body growth is to stimulate the liver and other tissues to secrete IGF1. It stimulates both the differentiation and proliferation of myoblasts. It also stimulates amino acid uptake and protein synthesis in muscle and other tissues. The sequence is that of Somatotropin (Gh1) from Mus musculus (Mouse).